The following is a 256-amino-acid chain: Phosphomannomutase (256 aa).

The active-site Nucleophile is the Asp12. Mg(2+)-binding residues include Asp12 and Asp14. Asp14 serves as the catalytic Proton donor/acceptor. Alpha-D-mannose 1-phosphate-binding residues include Arg21, Arg123, Arg134, Arg141, Ser179, and Asp181. Asp209 contributes to the Mg(2+) binding site.

This sequence belongs to the eukaryotic PMM family. Homodimer.

The protein localises to the cytoplasm. It catalyses the reaction alpha-D-mannose 1-phosphate = D-mannose 6-phosphate. Its pathway is nucleotide-sugar biosynthesis; GDP-alpha-D-mannose biosynthesis; alpha-D-mannose 1-phosphate from D-fructose 6-phosphate: step 2/2. Involved in the synthesis of the GDP-mannose and dolichol-phosphate-mannose required for a number of critical mannosyl transfer reactions. The polypeptide is Phosphomannomutase (SEC53) (Encephalitozoon cuniculi (strain GB-M1) (Microsporidian parasite)).